The primary structure comprises 186 residues: Ribosome-recycling factor (186 aa).

The protein belongs to the RRF family.

The protein resides in the cytoplasm. Functionally, responsible for the release of ribosomes from messenger RNA at the termination of protein biosynthesis. May increase the efficiency of translation by recycling ribosomes from one round of translation to another. In Nitratidesulfovibrio vulgaris (strain DP4) (Desulfovibrio vulgaris), this protein is Ribosome-recycling factor.